Consider the following 629-residue polypeptide: tRNA uridine 5-carboxymethylaminomethyl modification enzyme MnmG (629 aa).

FAD is bound by residues 13–18 (GGGHAG), valine 125, and serine 180. 273–287 (GPRYCPSIEDKVMRF) lines the NAD(+) pocket. Glutamine 370 is a binding site for FAD.

The protein belongs to the MnmG family. As to quaternary structure, homodimer. Heterotetramer of two MnmE and two MnmG subunits. Requires FAD as cofactor.

The protein localises to the cytoplasm. Its function is as follows. NAD-binding protein involved in the addition of a carboxymethylaminomethyl (cmnm) group at the wobble position (U34) of certain tRNAs, forming tRNA-cmnm(5)s(2)U34. The polypeptide is tRNA uridine 5-carboxymethylaminomethyl modification enzyme MnmG (Salmonella typhi).